A 562-amino-acid polypeptide reads, in one-letter code: Arginine--tRNA ligase (562 aa).

The short motif at 129-139 is the 'HIGH' region element; sequence ANPTGPLHVGH.

It belongs to the class-I aminoacyl-tRNA synthetase family. Monomer.

Its subcellular location is the cytoplasm. It catalyses the reaction tRNA(Arg) + L-arginine + ATP = L-arginyl-tRNA(Arg) + AMP + diphosphate. This Xanthomonas oryzae pv. oryzae (strain KACC10331 / KXO85) protein is Arginine--tRNA ligase.